Consider the following 259-residue polypeptide: Leucine-rich repeat-containing protein 3B (259 aa).

The signal sequence occupies residues 1 to 33 (MNLVDLWLTRSLSMCLLLQSFVLMILCFHSASM). The LRRNT domain occupies 34–64 (CPKGCLCSSSGGLNVTCSNANLKEIPRDLPP). A glycan (N-linked (GlcNAc...) asparagine) is linked at Asn47. 3 LRR repeats span residues 65–86 (ETVLLYLDSNQITSIPNEIFKD), 89–110 (QLRVLNLSKNGIEFIDEHAFKG), and 114–135 (TLQTLDLSDNRIQSVHKNAFNN). Asn94 is a glycosylation site (N-linked (GlcNAc...) asparagine). The 53-residue stretch at 145–197 (NPWHCDCTLQQVLRSMVSNHETAHNVICKTSVLDEHAGRPFLNAANDADLCNL) folds into the LRRCT domain. The helical transmembrane segment at 205 to 225 (AMLVTMFGWFTMVISYVVYYV) threads the bilayer.

This sequence belongs to the LRRC3 family.

The protein resides in the membrane. This is Leucine-rich repeat-containing protein 3B (LRRC3B) from Bos taurus (Bovine).